Reading from the N-terminus, the 386-residue chain is DNA-directed RNA polymerase subunit Rpo1C (386 aa).

The protein belongs to the RNA polymerase beta' chain family. Part of the RNA polymerase complex.

The protein localises to the cytoplasm. It catalyses the reaction RNA(n) + a ribonucleoside 5'-triphosphate = RNA(n+1) + diphosphate. DNA-dependent RNA polymerase (RNAP) catalyzes the transcription of DNA into RNA using the four ribonucleoside triphosphates as substrates. Forms part of the jaw domain. This Methanococcus vannielii (strain ATCC 35089 / DSM 1224 / JCM 13029 / OCM 148 / SB) protein is DNA-directed RNA polymerase subunit Rpo1C.